The following is a 369-amino-acid chain: Probable trehalose-phosphate phosphatase D (369 aa).

The disordered stretch occupies residues 63 to 85; sequence RASSPTRTRPGNISPLPESDEED.

This sequence belongs to the trehalose phosphatase family. It depends on a divalent metal cation as a cofactor.

The enzyme catalyses alpha,alpha-trehalose 6-phosphate + H2O = alpha,alpha-trehalose + phosphate. It participates in glycan biosynthesis; trehalose biosynthesis. In terms of biological role, removes the phosphate from trehalose 6-phosphate to produce free trehalose. Trehalose accumulation in plant may improve abiotic stress tolerance. The sequence is that of Probable trehalose-phosphate phosphatase D (TPPD) from Arabidopsis thaliana (Mouse-ear cress).